The chain runs to 598 residues: Elongation factor 4 (598 aa).

The tr-type G domain occupies 2–184 (KQIRNFSIIA…RLVKEIPAPE (183 aa)). Residues 14–19 (DHGKST) and 131–134 (NKID) contribute to the GTP site.

It belongs to the TRAFAC class translation factor GTPase superfamily. Classic translation factor GTPase family. LepA subfamily.

Its subcellular location is the cell inner membrane. The catalysed reaction is GTP + H2O = GDP + phosphate + H(+). In terms of biological role, required for accurate and efficient protein synthesis under certain stress conditions. May act as a fidelity factor of the translation reaction, by catalyzing a one-codon backward translocation of tRNAs on improperly translocated ribosomes. Back-translocation proceeds from a post-translocation (POST) complex to a pre-translocation (PRE) complex, thus giving elongation factor G a second chance to translocate the tRNAs correctly. Binds to ribosomes in a GTP-dependent manner. In Photorhabdus laumondii subsp. laumondii (strain DSM 15139 / CIP 105565 / TT01) (Photorhabdus luminescens subsp. laumondii), this protein is Elongation factor 4.